Consider the following 304-residue polypeptide: Protein phosphatase PTC7 homolog (304 aa).

A mitochondrion-targeting transit peptide spans methionine 1–histidine 68. The PPM-type phosphatase domain maps to arginine 69–valine 299. Mn(2+)-binding residues include aspartate 78, glycine 79, and aspartate 223.

Belongs to the PP2C family. Interacts with FBXL4, BNIP3 and NIX; these interactions are important for ubiquitination and degradation of BNIP3 and NIX. Mg(2+) serves as cofactor. Requires Mn(2+) as cofactor. As to expression, expressed in keratinocytes (at protein level).

It is found in the mitochondrion matrix. The catalysed reaction is O-phospho-L-seryl-[protein] + H2O = L-seryl-[protein] + phosphate. The enzyme catalyses O-phospho-L-threonyl-[protein] + H2O = L-threonyl-[protein] + phosphate. Its activity is regulated as follows. Inhibited by sodium orthovanadate. Functionally, protein phosphatase that plays an essential role in mitochondrial metabolism and biogenesis. Positively regulates biosynthesis of the ubiquinone, coenzyme Q. Dephosphorylates the ubiquinone biosynthesis protein COQ7 which is likely to lead to its activation. Serves as a crucial sensor for mitophagy, though the underlying mechanism remains ambiguous. May dephosphorylate BNIP3 and NIX and thereby directly regulates mitophagy receptor function and stability. Alternatively, promotes SCF-FBXL4-dependent ubiquitination and degradation of BNIP3 and NIX independently of its catalytic activity to restrain mitophagy. This chain is Protein phosphatase PTC7 homolog (PPTC7), found in Homo sapiens (Human).